Consider the following 331-residue polypeptide: GTP-binding protein RHO5 (331 aa).

Residue 10-17 (GDGAVGKT) coordinates GTP. The interval 51 to 76 (ASSPLELDNGNDKRGSLSSASSSPST) is disordered. Low complexity predominate over residues 66-75 (SLSSASSSPS). GTP is bound by residues 87 to 91 (DTAGQ) and 156 to 159 (TKSD). Residues Ser223 and Ser228 each carry the phosphoserine modification. Residues Thr232 and Thr244 each carry the phosphothreonine modification. Positions 239–331 (TATTNTNGDK…KKKKSKCVIL (93 aa)) are disordered. Positions 258–273 (HHNNSTDSTLPKGSLQ) are enriched in polar residues. A Glycyl lysine isopeptide (Lys-Gly) (interchain with G-Cter in ubiquitin) cross-link involves residue Lys276. Basic and acidic residues predominate over residues 287–297 (GQKDKIHEQSK). The segment covering 308–331 (HHNKQAKPKTRNDKKKKKSKCVIL) has biased composition (basic residues). Cys328 carries the cysteine methyl ester modification. Cys328 carries the S-geranylgeranyl cysteine lipid modification. A propeptide spans 329 to 331 (VIL) (removed in mature form).

The protein belongs to the small GTPase superfamily. Rho family. In terms of assembly, interacts with RGD2.

The protein localises to the membrane. It localises to the mitochondrion. In terms of biological role, small GTPase that negatively regulates a MAP kinase branch, downstream of SLT2, of the PKC1-mediated signal transduction pathway. With its specific guanine nucleotide exchange factor (GEF), the heterodimeric complex DCK1/LMO1, relocates to mitochondria upon oxidative stress and triggers cell death. The DCK1/LMO1/RHO5 signaling module that mediates mitochondrial turnover under nitrogen starvation conditions via mitophagy. The DCK1/LMO1/RHO5 signaling module also plays a role in cell wall integrity signaling. The sequence is that of GTP-binding protein RHO5 from Saccharomyces cerevisiae (strain ATCC 204508 / S288c) (Baker's yeast).